Reading from the N-terminus, the 192-residue chain is Xanthine phosphoribosyltransferase (192 aa).

2 residues coordinate xanthine: Leu-20 and Asn-27. 128–132 (ANGDA) is a binding site for 5-phospho-alpha-D-ribose 1-diphosphate. Residue Lys-156 coordinates xanthine.

The protein belongs to the purine/pyrimidine phosphoribosyltransferase family. Xpt subfamily. As to quaternary structure, homodimer.

The protein localises to the cytoplasm. The catalysed reaction is XMP + diphosphate = xanthine + 5-phospho-alpha-D-ribose 1-diphosphate. The protein operates within purine metabolism; XMP biosynthesis via salvage pathway; XMP from xanthine: step 1/1. Its function is as follows. Converts the preformed base xanthine, a product of nucleic acid breakdown, to xanthosine 5'-monophosphate (XMP), so it can be reused for RNA or DNA synthesis. The polypeptide is Xanthine phosphoribosyltransferase (Staphylococcus aureus (strain bovine RF122 / ET3-1)).